A 148-amino-acid chain; its full sequence is Protein RESISTANCE TO POWDERY MILDEW 8.1 (148 aa).

Residues 1 to 148 (MPIGELAIGA…VISACSKIRA (148 aa)) form the RPW8 domain. The helical transmembrane segment at 7 to 23 (AIGAVLGVGAQAIYDRF) threads the bilayer. Residues 120–140 (DDIKEIKAKISEMDTKLAEVI) adopt a coiled-coil conformation.

It belongs to the plant RPW8 protein family.

Its subcellular location is the membrane. Functionally, disease resistance (R) protein that induces localized, salicylic acid-dependent defenses. Confers resistance to powdery mildew (e.g. Erysiphe cichoracearum UCSC1). This chain is Protein RESISTANCE TO POWDERY MILDEW 8.1, found in Arabidopsis thaliana (Mouse-ear cress).